Reading from the N-terminus, the 291-residue chain is Verruculogen synthase (291 aa).

The protein belongs to the PhyH family. Homodimer. It depends on Fe cation as a cofactor.

It carries out the reaction fumitremorgin B + 2-oxoglutarate + AH2 + 2 O2 = verruculogen + succinate + A + CO2 + H2O. It participates in mycotoxin biosynthesis. Its function is as follows. Verruculogen synthase; part of the gene cluster that mediates the biosynthesis of fumitremorgins, indole alkaloids that carry not only intriguing chemical structures, but also interesting biological and pharmacological activities. The biosynthesis of fumitremorgin-type alkaloids begins by condensation of the two amino acids L-tryptophan and L-proline to brevianamide F, catalyzed by the non-ribosomal peptide synthetase ftmPS/ftmA. Brevianamide F is then prenylated by the prenyltransferase ftmPT1/ftmB in the presence of dimethylallyl diphosphate, resulting in the formation of tryprostatin B. The three cytochrome P450 monooxygenases, ftmP450-1/ftmC, ftmP450-2/ftmE and ftmP450-3/FtmG, are responsible for the conversion of tryprostatin B to 6-hydroxytryprostatin B, tryprostatin A to fumitremorgin C and fumitremorgin C to 12,13-dihydroxyfumitremorgin C, respectively. The putative methyltransferase ftmMT/ftmD is expected for the conversion of 6-hydroxytryprostatin B to tryprostatin A. FtmPT2/FtmH catalyzes the prenylation of 12,13-dihydroxyfumitre-morgin C in the presence of dimethylallyl diphosphate, resulting in the formation of fumitremorgin B. Fumitremorgin B is further converted to verruculogen by ftmOx1/ftmF via the insertion of an endoperoxide bond between the two prenyl moieties. Finally, verruculogen is further converted to fumitremorgin A by the verruculogen prenyltransferase ftmPT3. The chain is Verruculogen synthase from Neosartorya fischeri (strain ATCC 1020 / DSM 3700 / CBS 544.65 / FGSC A1164 / JCM 1740 / NRRL 181 / WB 181) (Aspergillus fischerianus).